The primary structure comprises 316 residues: Transcription initiation factor IIB (316 aa).

The segment at 7–38 adopts a TFIIB-type zinc-finger fold; sequence FRLRCPVCGSTDIVFNEETGEYVCARCGTIVL. Zn(2+) contacts are provided by C11, C14, C30, and C33. The disordered stretch occupies residues 51–73; it reads FTPEERERRGRTGAPLSPTLHDH. Repeat copies occupy residues 124–207 and 218–299.

The protein belongs to the TFIIB family.

In terms of biological role, stabilizes TBP binding to an archaeal box-A promoter. Also responsible for recruiting RNA polymerase II to the pre-initiation complex (DNA-TBP-TFIIB). The chain is Transcription initiation factor IIB from Ignicoccus hospitalis (strain KIN4/I / DSM 18386 / JCM 14125).